The sequence spans 436 residues: MSMFLDTAKVSVKAGRGGDGMVAFRREKYVANGGPWGGDGGRGGDVIFVVNEGLRTLMDFRYNRHFKAKAGEKGMTKGMHGRGAENLYVSVPQGTTVRDAQTGKVIADLVKNGQEFIVAHGGRGGRGNIRFATPRNPAPEISENGEPGEERELALELKILADVGLVGFPSVGKSTLLSVITAAKPKIGAYHFTTIVPNLGMVRTKSGDSFAVADLPGLIEGASQGVGLGTQFLRHIERTRVILHVIDMSASEGRDPYEDYLAINKELETYNLRLLERPQIIVANKMDMPQAAENLEQFKEKLDANYGEFDDKPQIFPISGIAHQGLDALLDATAQLLAQTDDFLLYDESDMQEEAYYGFEEEEKAFDISRADDAAWVLSGEKLEKLFVMTNMERDEAIMKFSRQLRGMGVDQALRERGAKDGDIVRIGKFEFEFVD.

The 159-residue stretch at 2–160 (SMFLDTAKVS…RELALELKIL (159 aa)) folds into the Obg domain. In terms of domain architecture, OBG-type G spans 161 to 338 (ADVGLVGFPS…LLDATAQLLA (178 aa)). Residues 167 to 174 (GFPSVGKS), 192 to 196 (FTTIV), 214 to 217 (DLPG), 284 to 287 (NKMD), and 319 to 321 (SGI) each bind GTP. Mg(2+) is bound by residues Ser-174 and Thr-194. In terms of domain architecture, OCT spans 358 to 436 (GFEEEEKAFD…IGKFEFEFVD (79 aa)).

It belongs to the TRAFAC class OBG-HflX-like GTPase superfamily. OBG GTPase family. As to quaternary structure, monomer. Mg(2+) serves as cofactor.

It is found in the cytoplasm. An essential GTPase which binds GTP, GDP and possibly (p)ppGpp with moderate affinity, with high nucleotide exchange rates and a fairly low GTP hydrolysis rate. Plays a role in control of the cell cycle, stress response, ribosome biogenesis and in those bacteria that undergo differentiation, in morphogenesis control. The protein is GTPase Obg of Streptococcus mutans serotype c (strain ATCC 700610 / UA159).